A 519-amino-acid polypeptide reads, in one-letter code: Protein nucleotidyltransferase YdiU (519 aa).

ATP is bound by residues G101, G103, R104, K124, D136, G137, R194, and R201. D271 acts as the Proton acceptor in catalysis. N272 and D281 together coordinate Mg(2+). D281 is a binding site for ATP.

It belongs to the SELO family. The cofactor is Mg(2+). Mn(2+) is required as a cofactor.

It carries out the reaction L-seryl-[protein] + ATP = 3-O-(5'-adenylyl)-L-seryl-[protein] + diphosphate. The catalysed reaction is L-threonyl-[protein] + ATP = 3-O-(5'-adenylyl)-L-threonyl-[protein] + diphosphate. The enzyme catalyses L-tyrosyl-[protein] + ATP = O-(5'-adenylyl)-L-tyrosyl-[protein] + diphosphate. It catalyses the reaction L-histidyl-[protein] + UTP = N(tele)-(5'-uridylyl)-L-histidyl-[protein] + diphosphate. It carries out the reaction L-seryl-[protein] + UTP = O-(5'-uridylyl)-L-seryl-[protein] + diphosphate. The catalysed reaction is L-tyrosyl-[protein] + UTP = O-(5'-uridylyl)-L-tyrosyl-[protein] + diphosphate. Functionally, nucleotidyltransferase involved in the post-translational modification of proteins. It can catalyze the addition of adenosine monophosphate (AMP) or uridine monophosphate (UMP) to a protein, resulting in modifications known as AMPylation and UMPylation. The polypeptide is Protein nucleotidyltransferase YdiU (Azoarcus sp. (strain BH72)).